The following is a 254-amino-acid chain: Phosphoribosylaminoimidazole-succinocarboxamide synthase (254 aa).

Belongs to the SAICAR synthetase family.

It catalyses the reaction 5-amino-1-(5-phospho-D-ribosyl)imidazole-4-carboxylate + L-aspartate + ATP = (2S)-2-[5-amino-1-(5-phospho-beta-D-ribosyl)imidazole-4-carboxamido]succinate + ADP + phosphate + 2 H(+). It participates in purine metabolism; IMP biosynthesis via de novo pathway; 5-amino-1-(5-phospho-D-ribosyl)imidazole-4-carboxamide from 5-amino-1-(5-phospho-D-ribosyl)imidazole-4-carboxylate: step 1/2. This is Phosphoribosylaminoimidazole-succinocarboxamide synthase from Sinorhizobium fredii (strain NBRC 101917 / NGR234).